A 199-amino-acid chain; its full sequence is Putative acetyltransferase SAR2635 (199 aa).

Belongs to the transferase hexapeptide repeat family.

This Staphylococcus aureus (strain MRSA252) protein is Putative acetyltransferase SAR2635.